Reading from the N-terminus, the 154-residue chain is 3-hydroxyacyl-[acyl-carrier-protein] dehydratase FabZ (154 aa).

Histidine 54 is a catalytic residue.

Belongs to the thioester dehydratase family. FabZ subfamily.

It localises to the cytoplasm. It catalyses the reaction a (3R)-hydroxyacyl-[ACP] = a (2E)-enoyl-[ACP] + H2O. In terms of biological role, involved in unsaturated fatty acids biosynthesis. Catalyzes the dehydration of short chain beta-hydroxyacyl-ACPs and long chain saturated and unsaturated beta-hydroxyacyl-ACPs. The chain is 3-hydroxyacyl-[acyl-carrier-protein] dehydratase FabZ from Shewanella oneidensis (strain ATCC 700550 / JCM 31522 / CIP 106686 / LMG 19005 / NCIMB 14063 / MR-1).